Reading from the N-terminus, the 157-residue chain is 3-hydroxyacyl-[acyl-carrier-protein] dehydratase FabZ (157 aa).

His-58 is a catalytic residue.

This sequence belongs to the thioester dehydratase family. FabZ subfamily.

The protein resides in the cytoplasm. The catalysed reaction is a (3R)-hydroxyacyl-[ACP] = a (2E)-enoyl-[ACP] + H2O. Its function is as follows. Involved in unsaturated fatty acids biosynthesis. Catalyzes the dehydration of short chain beta-hydroxyacyl-ACPs and long chain saturated and unsaturated beta-hydroxyacyl-ACPs. The protein is 3-hydroxyacyl-[acyl-carrier-protein] dehydratase FabZ of Rhizorhabdus wittichii (strain DSM 6014 / CCUG 31198 / JCM 15750 / NBRC 105917 / EY 4224 / RW1) (Sphingomonas wittichii).